The following is a 121-amino-acid chain: Large ribosomal subunit protein bL20 (121 aa).

It belongs to the bacterial ribosomal protein bL20 family.

Binds directly to 23S ribosomal RNA and is necessary for the in vitro assembly process of the 50S ribosomal subunit. It is not involved in the protein synthesizing functions of that subunit. This is Large ribosomal subunit protein bL20 from Mycoplasma mycoides subsp. mycoides SC (strain CCUG 32753 / NCTC 10114 / PG1).